Consider the following 359-residue polypeptide: GTPase Obg (359 aa).

The region spanning 1–159 is the Obg domain; the sequence is MQFIDQAEIQ…RSLRLELKLL (159 aa). The OBG-type G domain occupies 160 to 328; that stretch reads AEVGIIGLPN…LLHQIWQELE (169 aa). Residues 166 to 173, 191 to 195, 213 to 216, 280 to 283, and 309 to 311 contribute to the GTP site; these read GLPNAGKS, FTTLV, DIPG, NKID, and SAI. 2 residues coordinate Mg(2+): Ser173 and Thr193.

It belongs to the TRAFAC class OBG-HflX-like GTPase superfamily. OBG GTPase family. Monomer. It depends on Mg(2+) as a cofactor.

The protein localises to the cytoplasm. In terms of biological role, an essential GTPase which binds GTP, GDP and possibly (p)ppGpp with moderate affinity, with high nucleotide exchange rates and a fairly low GTP hydrolysis rate. Plays a role in control of the cell cycle, stress response, ribosome biogenesis and in those bacteria that undergo differentiation, in morphogenesis control. This chain is GTPase Obg, found in Cyanothece sp. (strain PCC 7425 / ATCC 29141).